The chain runs to 132 residues: Small ribosomal subunit protein uS8 (132 aa).

The protein belongs to the universal ribosomal protein uS8 family. As to quaternary structure, part of the 30S ribosomal subunit. Contacts proteins S5 and S12.

In terms of biological role, one of the primary rRNA binding proteins, it binds directly to 16S rRNA central domain where it helps coordinate assembly of the platform of the 30S subunit. The protein is Small ribosomal subunit protein uS8 of Beijerinckia indica subsp. indica (strain ATCC 9039 / DSM 1715 / NCIMB 8712).